Reading from the N-terminus, the 397-residue chain is Lysophospholipid transporter LplT (397 aa).

Residues 1–17 (MSESVHTNTSLWSKGMK) are Periplasmic-facing. The helical transmembrane segment at 18–38 (AVIVAQFLSAFGDNALLFATL) threads the bilayer. Over 39–52 (ALLKAQFYPEWSQP) the chain is Cytoplasmic. Residues 53-73 (ILQMVFVGAYILFAPFVGQVA) traverse the membrane as a helical segment. The Periplasmic portion of the chain corresponds to 74 to 90 (DSFAKGRVMMFANGLKL). Residues 91 to 111 (LGAASICFGINPFLGYTLVGV) form a helical membrane-spanning segment. Residues 112–144 (GAAAYSPAKYGILGELTTGSKLVKANGLMEAST) are Cytoplasmic-facing. Residues 145–165 (IAAILLGSVAGGVLADWHVLV) form a helical membrane-spanning segment. A166 is a topological domain (periplasmic). Residues 167-187 (LAACALAYGGAVVANIYIPKL) form a helical membrane-spanning segment. Residues 188-226 (AAARPGQSWNLINMTRSFLNACTSLWRNGETRFSLVGTS) lie on the Cytoplasmic side of the membrane. The helical transmembrane segment at 227 to 247 (LFWGAGVTLRFLLVLWVPVAL) threads the bilayer. The Periplasmic portion of the chain corresponds to 248 to 256 (GITDNATPT). Residues 257 to 277 (YLNAMVAIGIVVGAGAAAKLV) form a helical membrane-spanning segment. Topologically, residues 278–280 (TLE) are cytoplasmic. Residues 281 to 301 (TVSRCMPAGILIGVVVLIFSL) form a helical membrane-spanning segment. At 302-304 (QHE) the chain is on the periplasmic side. The chain crosses the membrane as a helical span at residues 305–325 (LLPAYALLMLIGVMGGFFVVP). Topologically, residues 326–343 (LNALLQERGKKSVGAGNA) are cytoplasmic. A helical transmembrane segment spans residues 344-364 (IAVQNLGENSAMLLMLGIYSL). Residues 365-366 (AV) lie on the Periplasmic side of the membrane. The chain crosses the membrane as a helical span at residues 367-387 (MVGIPVVPIGIGFGALFALAI). Topologically, residues 388 to 397 (TALWIWQRRH) are cytoplasmic.

The protein belongs to the major facilitator superfamily. LplT (TC 2.A.1.42) family.

The protein resides in the cell inner membrane. Its function is as follows. Catalyzes the facilitated diffusion of 2-acyl-glycero-3-phosphoethanolamine (2-acyl-GPE) into the cell. The protein is Lysophospholipid transporter LplT of Escherichia coli (strain ATCC 8739 / DSM 1576 / NBRC 3972 / NCIMB 8545 / WDCM 00012 / Crooks).